Consider the following 85-residue polypeptide: Cell division protein ZapA (85 aa).

Positions threonine 59–glutamate 85 form a coiled coil.

This sequence belongs to the ZapA family. Type 2 subfamily. Homodimer. Interacts with FtsZ.

Its subcellular location is the cytoplasm. Its function is as follows. Activator of cell division through the inhibition of FtsZ GTPase activity, therefore promoting FtsZ assembly into bundles of protofilaments necessary for the formation of the division Z ring. It is recruited early at mid-cell but it is not essential for cell division. This chain is Cell division protein ZapA, found in Bacillus velezensis (strain DSM 23117 / BGSC 10A6 / LMG 26770 / FZB42) (Bacillus amyloliquefaciens subsp. plantarum).